A 436-amino-acid polypeptide reads, in one-letter code: Trigger factor (436 aa).

In terms of domain architecture, PPIase FKBP-type spans 161–246 (EDQLNIDFVG…VNTVSEPKLP (86 aa)).

Belongs to the FKBP-type PPIase family. Tig subfamily.

The protein localises to the cytoplasm. It carries out the reaction [protein]-peptidylproline (omega=180) = [protein]-peptidylproline (omega=0). In terms of biological role, involved in protein export. Acts as a chaperone by maintaining the newly synthesized protein in an open conformation. Functions as a peptidyl-prolyl cis-trans isomerase. The protein is Trigger factor of Pseudomonas syringae pv. syringae (strain B728a).